We begin with the raw amino-acid sequence, 218 residues long: Cytochrome b6 (218 aa).

Residues 35-55 traverse the membrane as a helical segment; it reads IFYCLGGITLVCFLIQFATGF. A heme c-binding site is contributed by Cys-38. Residues His-89 and His-103 each contribute to the heme b site. 3 helical membrane passes run 93 to 113, 119 to 139, and 189 to 209; these read ASMM…TGGF, LTWV…VTGY, and LHTF…FLMI. Positions 190 and 205 each coordinate heme b.

It belongs to the cytochrome b family. PetB subfamily. The 4 large subunits of the cytochrome b6-f complex are cytochrome b6, subunit IV (17 kDa polypeptide, PetD), cytochrome f and the Rieske protein, while the 4 small subunits are PetG, PetL, PetM and PetN. The complex functions as a dimer. The cofactor is heme b. Heme c is required as a cofactor.

Its subcellular location is the cellular thylakoid membrane. In terms of biological role, component of the cytochrome b6-f complex, which mediates electron transfer between photosystem II (PSII) and photosystem I (PSI), cyclic electron flow around PSI, and state transitions. The sequence is that of Cytochrome b6 from Synechococcus sp. (strain RCC307).